A 242-amino-acid polypeptide reads, in one-letter code: Transcriptional activator protein BjaR1 (242 aa).

Residues 173–238 form the HTH luxR-type domain; it reads TPYPSTRLTP…HAVALAIRHK (66 aa). Residues 197–216 constitute a DNA-binding region (H-T-H motif); that stretch reads AWEIGEILHITQRTAEEHLA.

This sequence belongs to the autoinducer-regulated transcriptional regulatory protein family.

Transcriptional activator that functions in response to the quorum-sensing autoinducer IV-HSL (isovaleryl-homoserine lactone). Activates BjaI expression. Is sensitive to IV-HSL at concentrations as low as 10 pM. The protein is Transcriptional activator protein BjaR1 (bjaR1) of Bradyrhizobium diazoefficiens (strain JCM 10833 / BCRC 13528 / IAM 13628 / NBRC 14792 / USDA 110).